A 185-amino-acid polypeptide reads, in one-letter code: A-type ATP synthase subunit E (185 aa).

Belongs to the V-ATPase E subunit family. In terms of assembly, has multiple subunits with at least A(3), B(3), C, D, E, F, H, I and proteolipid K(x).

It is found in the cell membrane. In terms of biological role, component of the A-type ATP synthase that produces ATP from ADP in the presence of a proton gradient across the membrane. This Thermoplasma acidophilum (strain ATCC 25905 / DSM 1728 / JCM 9062 / NBRC 15155 / AMRC-C165) protein is A-type ATP synthase subunit E.